We begin with the raw amino-acid sequence, 280 residues long: Energy-coupling factor transporter ATP-binding protein EcfA1 (280 aa).

Positions 6–241 (LRTENISFQY…SHMLQEIGLD (236 aa)) constitute an ABC transporter domain. 40-47 (GQNGSGKS) serves as a coordination point for ATP.

Belongs to the ABC transporter superfamily. Energy-coupling factor EcfA family. As to quaternary structure, forms a stable energy-coupling factor (ECF) transporter complex composed of 2 membrane-embedded substrate-binding proteins (S component), 2 ATP-binding proteins (A component) and 2 transmembrane proteins (T component).

The protein localises to the cell membrane. ATP-binding (A) component of a common energy-coupling factor (ECF) ABC-transporter complex. Unlike classic ABC transporters this ECF transporter provides the energy necessary to transport a number of different substrates. The chain is Energy-coupling factor transporter ATP-binding protein EcfA1 from Bacillus cereus (strain ZK / E33L).